The chain runs to 110 residues: Ribonuclease P protein component 4 (110 aa).

Zn(2+) is bound by residues Cys-65, Cys-68, Cys-94, and Cys-97.

Belongs to the eukaryotic/archaeal RNase P protein component 4 family. As to quaternary structure, consists of a catalytic RNA component and at least 4-5 protein subunits. Zn(2+) serves as cofactor.

It is found in the cytoplasm. It catalyses the reaction Endonucleolytic cleavage of RNA, removing 5'-extranucleotides from tRNA precursor.. Functionally, part of ribonuclease P, a protein complex that generates mature tRNA molecules by cleaving their 5'-ends. The sequence is that of Ribonuclease P protein component 4 from Methanococcus maripaludis (strain C5 / ATCC BAA-1333).